The sequence spans 542 residues: Importin subunit alpha-1 (542 aa).

Residues 1–29 (MSASSRFIPEHRRQNYKGKGTFQADELRR) form a disordered region. Residues 1–60 (MSASSRFIPEHRRQNYKGKGTFQADELRRRRETQQIEIRKQKREENLNKRRNLVDVQEPA) enclose the IBB domain. ARM repeat units follow at residues 114-155 (IQKV…SSNQ), 156-197 (THVV…SPMC), 198-240 (RDHV…KNPQ), 241-282 (PDWN…ANEK), 283-324 (IQAI…DDVQ), 325-366 (TQVI…NSSQ), 367-408 (IQYV…GARR), and 409-453 (PDQI…GELD).

Belongs to the importin alpha family. Interacts with pap1.

The protein resides in the nucleus. Functionally, binds specifically and directly to substrates containing either a simple or bipartite NLS motif. Promotes docking of import substrates to the nuclear envelope. Seems to act as a cytosolic receptor for both simple and bipartite NLS motifs. Has an essential role in mitotic chromosome condensation. Involved in nuclear protein import. Required for efficient nuclear import of both an SV40 nuclear localization signal-containing reporter protein and the pap1 component of the stress response MAP kinase pathway. Required for proper mitotic progression. The sequence is that of Importin subunit alpha-1 (cut15) from Schizosaccharomyces pombe (strain 972 / ATCC 24843) (Fission yeast).